The following is a 310-amino-acid chain: Tyrosine recombinase XerC (310 aa).

Positions 22 to 103 (SQMLEAIEDF…SVKSFSTWAV (82 aa)) constitute a Core-binding (CB) domain. The Tyr recombinase domain maps to 124–304 (NLPRVLGEVQ…SSQRLLEAFR (181 aa)). Residues Arg-165, Lys-189, His-256, Arg-259, and His-282 contribute to the active site. Tyr-291 (O-(3'-phospho-DNA)-tyrosine intermediate) is an active-site residue.

Belongs to the 'phage' integrase family. XerC subfamily. As to quaternary structure, forms a cyclic heterotetrameric complex composed of two molecules of XerC and two molecules of XerD.

The protein localises to the cytoplasm. Functionally, site-specific tyrosine recombinase, which acts by catalyzing the cutting and rejoining of the recombining DNA molecules. The XerC-XerD complex is essential to convert dimers of the bacterial chromosome into monomers to permit their segregation at cell division. It also contributes to the segregational stability of plasmids. The chain is Tyrosine recombinase XerC from Corynebacterium efficiens (strain DSM 44549 / YS-314 / AJ 12310 / JCM 11189 / NBRC 100395).